Reading from the N-terminus, the 260-residue chain is Voltage-dependent calcium channel gamma-6 subunit (260 aa).

4 helical membrane-spanning segments follow: residues 43-63 (LLVA…EFWV), 143-163 (VIAV…IMVL), 169-189 (SLLR…FVSL), and 221-241 (LGCG…FLLL).

The protein belongs to the PMP-22/EMP/MP20 family. CACNG subfamily. Interacts with CACNA1C. Identified in a complex with the L-type calcium channel subunits CACNA1C, CACNA2D1 and either CACNB1 or CACNB2. As to expression, detected in brain and heart (at protein level).

It is found in the cell membrane. In terms of biological role, regulates the activity of L-type calcium channels that contain CACNA1C as pore-forming subunit. The sequence is that of Voltage-dependent calcium channel gamma-6 subunit (Cacng6) from Mus musculus (Mouse).